Consider the following 440-residue polypeptide: Aspartokinase (440 aa).

It belongs to the aspartokinase family.

It carries out the reaction L-aspartate + ATP = 4-phospho-L-aspartate + ADP. It functions in the pathway amino-acid biosynthesis; L-lysine biosynthesis via DAP pathway; (S)-tetrahydrodipicolinate from L-aspartate: step 1/4. The protein operates within amino-acid biosynthesis; L-methionine biosynthesis via de novo pathway; L-homoserine from L-aspartate: step 1/3. Its pathway is amino-acid biosynthesis; L-threonine biosynthesis; L-threonine from L-aspartate: step 1/5. This Chlamydia pneumoniae (Chlamydophila pneumoniae) protein is Aspartokinase (lysC).